The chain runs to 297 residues: Salivary glue protein Sgs-4 (297 aa).

The signal sequence occupies residues 1-21; it reads MRLELLVVLLVGLAALAPSGS. 21 consecutive repeat copies span residues 26–32, 33–39, 40–46, 47–53, 54–60, 61–67, 68–74, 75–81, 82–88, 89–95, 96–102, 103–109, 110–116, 117–123, 124–130, 131–137, 138–144, 145–151, 152–158, 159–165, and 166–172. Positions 26–84 are disordered; it reads TEPPRCETEPPRCETEPPRCETEPPRCETEPPRCETTTPKCETTPPTCRTEPPTCKTEP. The segment at 26–179 is 22 X 7 AA approximate tandem repeats of T-[ETK]-[PT]-P-[RKT]-C-[ERK]; it reads TEPPRCETEP…TCKTEPPCEK (154 aa). Residues 27 to 58 are compositionally biased toward basic and acidic residues; it reads EPPRCETEPPRCETEPPRCETEPPRCETEPPR. Residues 59 to 84 are compositionally biased toward low complexity; the sequence is CETTTPKCETTPPTCRTEPPTCKTEP. A compositionally biased stretch (low complexity) spans 141–174; the sequence is PTCKTEPPTCRTEPPTCKTEPPTCKTEPPTCKTE. Disordered stretches follow at residues 141-218 and 243-297; these read PTCK…SGCG and PDSK…KGGC. The stretch at 173–179 is one 22; approximate repeat; the sequence is TEPPCEK. 2 stretches are compositionally biased toward basic residues: residues 181–208 and 282–291; these read CTKR…HHNR and NTTKKPRKTQ.

In terms of tissue distribution, salivary gland.

The protein localises to the secreted. This chain is Salivary glue protein Sgs-4 (Sgs4), found in Drosophila melanogaster (Fruit fly).